A 516-amino-acid polypeptide reads, in one-letter code: Protein phosphatase 1H (516 aa).

Disordered stretches follow at residues 102–122 (ADPS…PSGD) and 181–202 (PPTC…SGSQ). Positions 106 to 506 (SVSYTPSRRR…DDISVFIIPL (401 aa)) constitute a PPM-type phosphatase domain. Over residues 190–202 (PNPQLHASASGSQ) the composition is skewed to polar residues.

It belongs to the PP2C family.

Its subcellular location is the nucleus. It is found in the cytoplasm. It catalyses the reaction O-phospho-L-seryl-[protein] + H2O = L-seryl-[protein] + phosphate. The enzyme catalyses O-phospho-L-threonyl-[protein] + H2O = L-threonyl-[protein] + phosphate. The protein is Protein phosphatase 1H (ppm1h) of Danio rerio (Zebrafish).